Here is a 146-residue protein sequence, read N- to C-terminus: Probable cyclic pyranopterin monophosphate synthase (146 aa).

Substrate contacts are provided by residues 66–68 (LTH) and 102–103 (ME). Asp-117 is an active-site residue.

This sequence belongs to the MoaC family. Homohexamer; trimer of dimers.

It catalyses the reaction (8S)-3',8-cyclo-7,8-dihydroguanosine 5'-triphosphate = cyclic pyranopterin phosphate + diphosphate. It functions in the pathway cofactor biosynthesis; molybdopterin biosynthesis. Functionally, catalyzes the conversion of (8S)-3',8-cyclo-7,8-dihydroguanosine 5'-triphosphate to cyclic pyranopterin monophosphate (cPMP). The protein is Probable cyclic pyranopterin monophosphate synthase of Aeropyrum pernix (strain ATCC 700893 / DSM 11879 / JCM 9820 / NBRC 100138 / K1).